Reading from the N-terminus, the 313-residue chain is BTB/POZ domain-containing adapter for CUL3-mediated RhoA degradation protein 3 (313 aa).

M1 bears the N-acetylmethionine mark. Residue S23 is modified to Phosphoserine. A BTB domain is found at K32–E100. Residues Q239–P245 carry the PCNA-binding motif.

It belongs to the BACURD family. As to quaternary structure, homotetramer; forms a two-fold symmetric tetramer in solution. Interacts with CUL3; interaction is direct and forms a 5:5 heterodecamer. Component of the BCR(BACURD3) E3 ubiquitin ligase complex, at least composed of CUL3, KCTD10/BACURD3 and RBX1. Interacts with DNA polymerase delta subunit 2/POLD2. Interacts with PCNA.

It is found in the nucleus. The protein operates within protein modification; protein ubiquitination. Its function is as follows. Substrate-specific adapter of a BCR (BTB-CUL3-RBX1) E3 ubiquitin-protein ligase complex. The BCR(BACURD3) E3 ubiquitin ligase complex mediates the ubiquitination of target proteins, leading to their degradation by the proteasome. The sequence is that of BTB/POZ domain-containing adapter for CUL3-mediated RhoA degradation protein 3 (KCTD10) from Homo sapiens (Human).